A 410-amino-acid polypeptide reads, in one-letter code: Peptidase T (410 aa).

Histidine 79 is a Zn(2+) binding site. Residue aspartate 81 is part of the active site. Aspartate 142 contacts Zn(2+). Glutamate 176 (proton acceptor) is an active-site residue. Zn(2+)-binding residues include glutamate 177, aspartate 199, and histidine 381.

Belongs to the peptidase M20B family. Requires Zn(2+) as cofactor.

It is found in the cytoplasm. It carries out the reaction Release of the N-terminal residue from a tripeptide.. Cleaves the N-terminal amino acid of tripeptides. This Bacillus cereus (strain ATCC 10987 / NRS 248) protein is Peptidase T.